A 231-amino-acid chain; its full sequence is ATP-dependent dethiobiotin synthetase BioD 2 (231 aa).

Position 13 to 18 (13 to 18) interacts with ATP; the sequence is SVGKTV. Residue Thr-17 coordinates Mg(2+). Lys-38 is a catalytic residue. Residues Asp-55, 112–115, 172–173, 201–203, and Gln-208 each bind ATP; these read EGTG, NR, and PYL. Residues Asp-55 and Glu-112 each coordinate Mg(2+).

This sequence belongs to the dethiobiotin synthetase family. In terms of assembly, homodimer. Mg(2+) is required as a cofactor.

Its subcellular location is the cytoplasm. It catalyses the reaction (7R,8S)-7,8-diammoniononanoate + CO2 + ATP = (4R,5S)-dethiobiotin + ADP + phosphate + 3 H(+). It participates in cofactor biosynthesis; biotin biosynthesis; biotin from 7,8-diaminononanoate: step 1/2. Functionally, catalyzes a mechanistically unusual reaction, the ATP-dependent insertion of CO2 between the N7 and N8 nitrogen atoms of 7,8-diaminopelargonic acid (DAPA, also called 7,8-diammoniononanoate) to form a ureido ring. This Escherichia coli O157:H7 protein is ATP-dependent dethiobiotin synthetase BioD 2.